The primary structure comprises 231 residues: Ribose-5-phosphate isomerase A (231 aa).

Residues 28-31, 83-86, and 96-99 contribute to the substrate site; these read TGST, DGAD, and KGGG. Residue Glu-105 is the Proton acceptor of the active site. Lys-123 contributes to the substrate binding site.

The protein belongs to the ribose 5-phosphate isomerase family. Homodimer.

It catalyses the reaction aldehydo-D-ribose 5-phosphate = D-ribulose 5-phosphate. It participates in carbohydrate degradation; pentose phosphate pathway; D-ribose 5-phosphate from D-ribulose 5-phosphate (non-oxidative stage): step 1/1. In terms of biological role, catalyzes the reversible conversion of ribose-5-phosphate to ribulose 5-phosphate. The protein is Ribose-5-phosphate isomerase A of Sinorhizobium medicae (strain WSM419) (Ensifer medicae).